The primary structure comprises 360 residues: Mannonate dehydratase (360 aa).

It belongs to the mannonate dehydratase family. The cofactor is Fe(2+). It depends on Mn(2+) as a cofactor.

The catalysed reaction is D-mannonate = 2-dehydro-3-deoxy-D-gluconate + H2O. It functions in the pathway carbohydrate metabolism; pentose and glucuronate interconversion. Functionally, catalyzes the dehydration of D-mannonate. This chain is Mannonate dehydratase, found in Thermotoga sp. (strain RQ2).